A 318-amino-acid polypeptide reads, in one-letter code: uncharacterized protein (318 aa).

The next 2 membrane-spanning stretches (helical) occupy residues 230-250 (VWTY…SFLI) and 264-284 (ASLM…LGVI).

It belongs to the glycosyltransferase 2 family. GtrB subfamily.

The protein localises to the cell membrane. This is an uncharacterized protein from Synechocystis sp. (strain ATCC 27184 / PCC 6803 / Kazusa).